Consider the following 72-residue polypeptide: Translation initiation factor IF-1 (72 aa).

The S1-like domain occupies 1–72 (MAKEDSIEMQ…TKGRIIFRAR (72 aa)).

The protein belongs to the IF-1 family. In terms of assembly, component of the 30S ribosomal translation pre-initiation complex which assembles on the 30S ribosome in the order IF-2 and IF-3, IF-1 and N-formylmethionyl-tRNA(fMet); mRNA recruitment can occur at any time during PIC assembly.

It is found in the cytoplasm. Functionally, one of the essential components for the initiation of protein synthesis. Stabilizes the binding of IF-2 and IF-3 on the 30S subunit to which N-formylmethionyl-tRNA(fMet) subsequently binds. Helps modulate mRNA selection, yielding the 30S pre-initiation complex (PIC). Upon addition of the 50S ribosomal subunit IF-1, IF-2 and IF-3 are released leaving the mature 70S translation initiation complex. This Actinobacillus succinogenes (strain ATCC 55618 / DSM 22257 / CCUG 43843 / 130Z) protein is Translation initiation factor IF-1.